An 812-amino-acid polypeptide reads, in one-letter code: Probable beta-glucosidase D (812 aa).

A signal peptide spans 1–18 (MRVPSLSVLSFLLGTALA). Residues Asn53 and Asn188 are each glycosylated (N-linked (GlcNAc...) asparagine). A disordered region spans residues 186–248 (ETNRTGGMGG…GMGGGMAGSS (63 aa)). Over residues 191–207 (GGMGGGGGAPGGGGMGR) the composition is skewed to gly residues. The span at 211 to 225 (FSSSVPGGMSPTSSA) shows a compositional bias: polar residues. Positions 236-245 (GGSGMGGGMA) are enriched in gly residues. N-linked (GlcNAc...) asparagine glycosylation is present at Asn296. Asp324 is a catalytic residue. Residues Asn360, Asn384, Asn422, Asn501, Asn592, and Asn646 are each glycosylated (N-linked (GlcNAc...) asparagine).

The protein belongs to the glycosyl hydrolase 3 family.

It is found in the secreted. It carries out the reaction Hydrolysis of terminal, non-reducing beta-D-glucosyl residues with release of beta-D-glucose.. It participates in glycan metabolism; cellulose degradation. Its function is as follows. Beta-glucosidases are one of a number of cellulolytic enzymes involved in the degradation of cellulosic biomass. Catalyzes the last step releasing glucose from the inhibitory cellobiose. This Emericella nidulans (strain FGSC A4 / ATCC 38163 / CBS 112.46 / NRRL 194 / M139) (Aspergillus nidulans) protein is Probable beta-glucosidase D (bglD).